A 592-amino-acid polypeptide reads, in one-letter code: N-acetyltransferase ESCO2 (592 aa).

Phosphoserine occurs at positions 41 and 85. Residues 267-294 (KSSVKVQNARSKNEEKLRKNPSGAVVSS) form a disordered region. Position 309 is a phosphoserine (Ser-309). The CCHH-type zinc finger occupies 384 to 408 (TVCKSCGMIYTASNPEDEIQHLQHH).

This sequence belongs to the acetyltransferase family. ECO subfamily.

The protein resides in the nucleus. It localises to the chromosome. The enzyme catalyses L-lysyl-[protein] + acetyl-CoA = N(6)-acetyl-L-lysyl-[protein] + CoA + H(+). In terms of biological role, acetyltransferase required for the establishment of sister chromatid cohesion. Couples the processes of cohesion and DNA replication to ensure that only sister chromatids become paired together. In contrast to the structural cohesins, the deposition and establishment factors are required only during the S phase. Acetylates the cohesin component SMC3. This is N-acetyltransferase ESCO2 (Esco2) from Mus musculus (Mouse).